Here is a 423-residue protein sequence, read N- to C-terminus: Serine hydroxymethyltransferase (423 aa).

(6S)-5,6,7,8-tetrahydrofolate contacts are provided by residues Leu120 and 124 to 126 (GHL). Lys229 is subject to N6-(pyridoxal phosphate)lysine. 353-355 (SPF) is a (6S)-5,6,7,8-tetrahydrofolate binding site.

The protein belongs to the SHMT family. As to quaternary structure, homodimer. Pyridoxal 5'-phosphate serves as cofactor.

The protein localises to the cytoplasm. It carries out the reaction (6R)-5,10-methylene-5,6,7,8-tetrahydrofolate + glycine + H2O = (6S)-5,6,7,8-tetrahydrofolate + L-serine. It participates in one-carbon metabolism; tetrahydrofolate interconversion. It functions in the pathway amino-acid biosynthesis; glycine biosynthesis; glycine from L-serine: step 1/1. Functionally, catalyzes the reversible interconversion of serine and glycine with tetrahydrofolate (THF) serving as the one-carbon carrier. This reaction serves as the major source of one-carbon groups required for the biosynthesis of purines, thymidylate, methionine, and other important biomolecules. Also exhibits THF-independent aldolase activity toward beta-hydroxyamino acids, producing glycine and aldehydes, via a retro-aldol mechanism. In Prochlorococcus marinus (strain MIT 9515), this protein is Serine hydroxymethyltransferase.